Consider the following 205-residue polypeptide: Regulator of G-protein signaling 4 (205 aa).

S-palmitoyl cysteine attachment occurs at residues C2, C12, and C95. The region spanning 62–178 (SLENLISHEC…LKSRFYLDLV (117 aa)) is the RGS domain.

In terms of processing, palmitoylated on Cys-2 and/or Cys-12. Post-translationally, phosphorylated by cyclic GMP-dependent protein kinase. In terms of tissue distribution, expressed in brain and heart. Expressed in brain at protein level. Expressed in prefontal and visual cortex. Isoform 4 and isoform 5 are expressed ubiquitously. Isoform 1, isoform 2 and isoform 3 are not expressed in the cerebellum.

Inhibits signal transduction by increasing the GTPase activity of G protein alpha subunits thereby driving them into their inactive GDP-bound form. Activity on G(z)-alpha is inhibited by phosphorylation of the G-protein. Activity on G(z)-alpha and G(i)-alpha-1 is inhibited by palmitoylation of the G-protein. The sequence is that of Regulator of G-protein signaling 4 (RGS4) from Homo sapiens (Human).